The primary structure comprises 368 residues: Carbamoyl phosphate synthase small chain (368 aa).

The interval methionine 1 to glycine 178 is CPSase. The L-glutamine site is built by serine 45, glycine 230, and glycine 232. In terms of domain architecture, Glutamine amidotransferase type-1 spans histidine 182–leucine 368. The Nucleophile role is filled by cysteine 257. Residues phenylalanine 258, glutamine 261, asparagine 299, glycine 301, and tyrosine 302 each contribute to the L-glutamine site. Residues histidine 342 and glutamate 344 contribute to the active site.

Belongs to the CarA family. Composed of two chains; the small (or glutamine) chain promotes the hydrolysis of glutamine to ammonia, which is used by the large (or ammonia) chain to synthesize carbamoyl phosphate. Tetramer of heterodimers (alpha,beta)4.

The enzyme catalyses hydrogencarbonate + L-glutamine + 2 ATP + H2O = carbamoyl phosphate + L-glutamate + 2 ADP + phosphate + 2 H(+). The catalysed reaction is L-glutamine + H2O = L-glutamate + NH4(+). Its pathway is amino-acid biosynthesis; L-arginine biosynthesis; carbamoyl phosphate from bicarbonate: step 1/1. The protein operates within pyrimidine metabolism; UMP biosynthesis via de novo pathway; (S)-dihydroorotate from bicarbonate: step 1/3. Functionally, small subunit of the glutamine-dependent carbamoyl phosphate synthetase (CPSase). CPSase catalyzes the formation of carbamoyl phosphate from the ammonia moiety of glutamine, carbonate, and phosphate donated by ATP, constituting the first step of 2 biosynthetic pathways, one leading to arginine and/or urea and the other to pyrimidine nucleotides. The small subunit (glutamine amidotransferase) binds and cleaves glutamine to supply the large subunit with the substrate ammonia. The polypeptide is Carbamoyl phosphate synthase small chain (Methanosarcina mazei (strain ATCC BAA-159 / DSM 3647 / Goe1 / Go1 / JCM 11833 / OCM 88) (Methanosarcina frisia)).